Consider the following 176-residue polypeptide: Cytochrome b (176 aa).

Transmembrane regions (helical) follow at residues 33-53 (FGSL…FLAM), 77-98 (WVLR…YLHV), and 113-133 (WNMG…GYVL). 2 residues coordinate heme b: His-83 and His-97.

The protein belongs to the cytochrome b family. The cytochrome bc1 complex contains 11 subunits: 3 respiratory subunits (MT-CYB, CYC1 and UQCRFS1), 2 core proteins (UQCRC1 and UQCRC2) and 6 low-molecular weight proteins (UQCRH/QCR6, UQCRB/QCR7, UQCRQ/QCR8, UQCR10/QCR9, UQCR11/QCR10 and a cleavage product of UQCRFS1). This cytochrome bc1 complex then forms a dimer. The cofactor is heme b.

The protein resides in the mitochondrion inner membrane. In terms of biological role, component of the ubiquinol-cytochrome c reductase complex (complex III or cytochrome b-c1 complex) that is part of the mitochondrial respiratory chain. The b-c1 complex mediates electron transfer from ubiquinol to cytochrome c. Contributes to the generation of a proton gradient across the mitochondrial membrane that is then used for ATP synthesis. In Lasionycteris noctivagans (Silver-haired bat), this protein is Cytochrome b (MT-CYB).